We begin with the raw amino-acid sequence, 228 residues long: UPF0173 metal-dependent hydrolase BcerKBAB4_4442 (228 aa).

Belongs to the UPF0173 family.

The protein is UPF0173 metal-dependent hydrolase BcerKBAB4_4442 of Bacillus mycoides (strain KBAB4) (Bacillus weihenstephanensis).